A 90-amino-acid chain; its full sequence is uncharacterized protein (90 aa).

The interval 25–90 (GEAAYNSPTN…PPIAPPPILD (66 aa)) is disordered. Polar residues-rich tracts occupy residues 30–54 (NSPT…TESV) and 65–79 (NDQT…SNVN).

This is an uncharacterized protein from Bacillus subtilis (strain 168).